Here is a 684-residue protein sequence, read N- to C-terminus: Threonine--tRNA ligase (684 aa).

Residues 1–66 form the TGS domain; the sequence is MTVPATDSCP…DTDAEVVPVA (66 aa). Positions 261 to 567 are catalytic; sequence DHRKLGSELD…LTEHYAGAFP (307 aa). 3 residues coordinate Zn(2+): C366, H417, and H544.

It belongs to the class-II aminoacyl-tRNA synthetase family. As to quaternary structure, homodimer. Zn(2+) is required as a cofactor.

The protein resides in the cytoplasm. It carries out the reaction tRNA(Thr) + L-threonine + ATP = L-threonyl-tRNA(Thr) + AMP + diphosphate + H(+). Functionally, catalyzes the attachment of threonine to tRNA(Thr) in a two-step reaction: L-threonine is first activated by ATP to form Thr-AMP and then transferred to the acceptor end of tRNA(Thr). Also edits incorrectly charged L-seryl-tRNA(Thr). The sequence is that of Threonine--tRNA ligase from Mycolicibacterium paratuberculosis (strain ATCC BAA-968 / K-10) (Mycobacterium paratuberculosis).